A 732-amino-acid chain; its full sequence is Ribosomal RNA large subunit methyltransferase K/L (732 aa).

In terms of domain architecture, THUMP spans 50–162 (MAYRICLWSR…RGRLLLGLDL (113 aa)). Positions 396-424 (TERETSSEGDEPQGASGATSRPGPRNDGA) are disordered.

This sequence belongs to the methyltransferase superfamily. RlmKL family.

The protein localises to the cytoplasm. It carries out the reaction guanosine(2445) in 23S rRNA + S-adenosyl-L-methionine = N(2)-methylguanosine(2445) in 23S rRNA + S-adenosyl-L-homocysteine + H(+). The enzyme catalyses guanosine(2069) in 23S rRNA + S-adenosyl-L-methionine = N(2)-methylguanosine(2069) in 23S rRNA + S-adenosyl-L-homocysteine + H(+). Its function is as follows. Specifically methylates the guanine in position 2445 (m2G2445) and the guanine in position 2069 (m7G2069) of 23S rRNA. This chain is Ribosomal RNA large subunit methyltransferase K/L, found in Chromohalobacter salexigens (strain ATCC BAA-138 / DSM 3043 / CIP 106854 / NCIMB 13768 / 1H11).